The primary structure comprises 239 residues: MEAVIKVISSACKTYCGKTSPSKKEIGAMLSLLQKEGLLMSPSDLYSPGSWDPITAALSQRAMVLGKSGELKTWGLVLGALKAAREEQVTSEQAKFWLGLGGGRVSPPGPECIEKPATERRIDKGEEVGETTAQRDAKMAPEKMATPKTVGTSCYQCGTATGCNCATASAPPPPYVGSGLYPSLAGVGEQQGQGGDTPWGAEQPRAEPGHAGLAPGPALTDWARIREELASTGPPVVAM.

Residues 124 to 141 (KGEEVGETTAQRDAKMAP) are compositionally biased toward basic and acidic residues. The tract at residues 124–144 (KGEEVGETTAQRDAKMAPEKM) is disordered. Positions 172 to 175 (PPPY) match the PPXY motif motif. Positions 184–214 (LAGVGEQQGQGGDTPWGAEQPRAEPGHAGLA) are disordered.

It localises to the virion. The chain is Gag polyprotein (ev-1) from Galliformes.